Consider the following 187-residue polypeptide: Sliding-clamp-loader small subunit (187 aa).

It belongs to the Tevenvirinae sliding-clamp-loader small subunit family. As to quaternary structure, the sliding-clamp-loader consists of 4 large subunits and 1 small subunit. Interacts with the sliding clamp; this interaction allows the sliding-clamp-loader to open the sliding clamp. Part of the replicase complex that includes the DNA polymerase, the polymerase clamp, the clamp loader complex, the single-stranded DNA binding protein, the primase, the helicase and the helicase assembly factor.

Its function is as follows. Forms the sliding-clamp-loader together with the small subunit. The clamp loader holds the clamp in an open conformation and places it onto the DNA. This chain is Sliding-clamp-loader small subunit (62), found in Escherichia coli (Bacteriophage T4).